The primary structure comprises 954 residues: Chromosomal passenger complex protein BIR1 (954 aa).

BIR repeat units follow at residues 20 to 117 and 153 to 241; these read RLRT…LLIY and RKFT…YFFQ. Residues C208, C211, H228, and C237 each contribute to the Zn(2+) site. Positions 375 to 419 are disordered; it reads NVQLTQSSSPIKKKRKFKRISPRKIFDEEDSEHSLNNNSANGDNK. Over residues 385-396 the composition is skewed to basic residues; that stretch reads IKKKRKFKRISP. 3 positions are modified to phosphoserine: S477, S508, and S552. Disordered regions lie at residues 541–645 and 661–685; these read DIDR…SGKV and FSASDFSPSSQSEQSSKSSSVISTP. Residues 556 to 583 are compositionally biased toward basic and acidic residues; sequence PKTHELIRDNSEKREAQNGEFRHQKDST. The residue at position 587 (S587) is a Phosphoserine. Over residues 593–604 the composition is skewed to polar residues; that stretch reads SNKSGDNSSNIT. A phosphoserine mark is found at S751 and S765. Positions 798–839 are disordered; that stretch reads LVSGTSSYPRNSRLEEQRKETSTSLADNSKKGSSFNEGNNEK. A compositionally biased stretch (basic and acidic residues) spans 809-818; the sequence is SRLEEQRKET. A compositionally biased stretch (polar residues) spans 819-835; it reads STSLADNSKKGSSFNEG.

In terms of assembly, component of the CPC complex at least composed of IPL1, BIR1 and SLI15. Interacts with CBF2/NDC10. Interacts with CBF3D/SKP1.

Component of the chromosomal passenger complex (CPC), a complex that acts as a key regulator of chromosome segregation and cytokinesis. This Saccharomyces cerevisiae (strain ATCC 204508 / S288c) (Baker's yeast) protein is Chromosomal passenger complex protein BIR1 (BIR1).